We begin with the raw amino-acid sequence, 149 residues long: Transcriptional repressor NrdR (149 aa).

A zinc finger spans residues 3–34; sequence CPFCSEQETKVIDSRLVAEGQQVRRRRECMVC. In terms of domain architecture, ATP-cone spans 49 to 139; sequence PRVIKRDGSR…VYRSFEDIRE (91 aa).

This sequence belongs to the NrdR family. It depends on Zn(2+) as a cofactor.

Its function is as follows. Negatively regulates transcription of bacterial ribonucleotide reductase nrd genes and operons by binding to NrdR-boxes. This is Transcriptional repressor NrdR from Alteromonas mediterranea (strain DSM 17117 / CIP 110805 / LMG 28347 / Deep ecotype).